Reading from the N-terminus, the 479-residue chain is Protein C-ets-2 (479 aa).

The region spanning 88 to 173 (DTFSGFTKEQ…EHLEQMIKDS (86 aa)) is the PNT domain. The ETS DNA-binding region spans 373–453 (IQLWQFLLEL…SGKRYVYRFV (81 aa)).

It belongs to the ETS family.

The protein localises to the nucleus. Probable transcription factor. This chain is Protein C-ets-2 (ETS2), found in Gallus gallus (Chicken).